We begin with the raw amino-acid sequence, 146 residues long: Leghemoglobin Lb120-1 (146 aa).

One can recognise a Globin domain in the interval 2–146 (GFTEKQEALV…LASAIKKAMN (145 aa)). Nitrated tyrosine is present on residues Y24 and Y29. S44 provides a ligand contact to heme b. Residue S44 is modified to Phosphoserine. H61 provides a ligand contact to O2. Heme b contacts are provided by K64, H93, and K96. The residue at position 134 (Y134) is a Nitrated tyrosine.

Belongs to the plant globin family. As to quaternary structure, monomer. Nitrated in effective nodules and particularly in hypoxic conditions; this mechanism may play a protective role in the symbiosis by buffering toxic peroxynitrite NO(2)(-). Nitration level decrease during nodule senescence. Post-translationally, phosphorylation at Ser-44 disrupts the molecular environment of its porphyrin ring oxygen binding pocket, thus leading to a reduced oxygen consumption and to the delivery of oxygen O(2) to symbiosomes. In terms of tissue distribution, root nodules.

It is found in the cytoplasm. It localises to the cytosol. The protein localises to the nucleus. Leghemoglobin that reversibly binds oxygen O(2) through a pentacoordinated heme iron. In root nodules, facilitates the diffusion of oxygen to the bacteroids while preventing the bacterial nitrogenase from being inactivated by buffering dioxygen, nitric oxide and carbon monoxide, and promoting the formation of reactive oxygen species (ROS, e.g. H(2)O(2)). This role is essential for symbiotic nitrogen fixation (SNF). The protein is Leghemoglobin Lb120-1 of Pisum sativum (Garden pea).